The primary structure comprises 225 residues: 2-C-methyl-D-erythritol 4-phosphate cytidylyltransferase (225 aa).

It belongs to the IspD/TarI cytidylyltransferase family. IspD subfamily.

It carries out the reaction 2-C-methyl-D-erythritol 4-phosphate + CTP + H(+) = 4-CDP-2-C-methyl-D-erythritol + diphosphate. Its pathway is isoprenoid biosynthesis; isopentenyl diphosphate biosynthesis via DXP pathway; isopentenyl diphosphate from 1-deoxy-D-xylulose 5-phosphate: step 2/6. Its function is as follows. Catalyzes the formation of 4-diphosphocytidyl-2-C-methyl-D-erythritol from CTP and 2-C-methyl-D-erythritol 4-phosphate (MEP). The sequence is that of 2-C-methyl-D-erythritol 4-phosphate cytidylyltransferase from Haemophilus influenzae (strain PittGG).